Here is a 439-residue protein sequence, read N- to C-terminus: DNA damage-inducible protein 1 (439 aa).

Positions 1-82 (MQITIAIQDT…LALHVRETQR (82 aa)) constitute a Ubiquitin-like domain. The tract at residues 82–101 (RATAVPESQQGRPAAPPQQD) is disordered. The active site involves Asp-220. Residues 333–398 (QDEPTIEGPG…PAPRAPQARS (66 aa)) are disordered. Low complexity-rich tracts occupy residues 364-375 (GQAGPSTAAQPG) and 383-398 (PASASAPAPRAPQARS). Residues 398–438 (SFPREHIEQLVALGADEQKAIRALEATDGNVEYAASLIFEG) enclose the UBA domain.

The protein belongs to the DDI1 family. Binds ubiquitin and polyubiquitinated proteins.

Its subcellular location is the cytoplasm. Functionally, probable aspartic protease. May be involved in the regulation of exocytosis. Acts as a linker between the 19S proteasome and polyubiquitinated proteins via UBA domain interactions with ubiquitin for their subsequent degradation. Required for S-phase checkpoint control. This chain is DNA damage-inducible protein 1 (ddi-1), found in Neurospora crassa (strain ATCC 24698 / 74-OR23-1A / CBS 708.71 / DSM 1257 / FGSC 987).